The primary structure comprises 298 residues: Tyrosine recombinase XerC (298 aa).

A Core-binding (CB) domain is found at 1-84 (MNHIQEAFLN…TLRTFYEYWM (84 aa)). Positions 105–286 (YLPQFFYEEE…SNQQLRKVYL (182 aa)) constitute a Tyr recombinase domain. Residues Arg145, Lys169, His238, Arg241, and His264 contribute to the active site. Tyr273 acts as the O-(3'-phospho-DNA)-tyrosine intermediate in catalysis.

It belongs to the 'phage' integrase family. XerC subfamily. Forms a cyclic heterotetrameric complex composed of two molecules of XerC and two molecules of XerD.

It is found in the cytoplasm. In terms of biological role, site-specific tyrosine recombinase, which acts by catalyzing the cutting and rejoining of the recombining DNA molecules. The XerC-XerD complex is essential to convert dimers of the bacterial chromosome into monomers to permit their segregation at cell division. It also contributes to the segregational stability of plasmids. The chain is Tyrosine recombinase XerC from Staphylococcus aureus (strain JH1).